The primary structure comprises 346 residues: N-acetyl-gamma-glutamyl-phosphate reductase (346 aa).

The active site involves Cys-149.

This sequence belongs to the NAGSA dehydrogenase family. Type 1 subfamily.

Its subcellular location is the cytoplasm. The catalysed reaction is N-acetyl-L-glutamate 5-semialdehyde + phosphate + NADP(+) = N-acetyl-L-glutamyl 5-phosphate + NADPH + H(+). Its pathway is amino-acid biosynthesis; L-arginine biosynthesis; N(2)-acetyl-L-ornithine from L-glutamate: step 3/4. Functionally, catalyzes the NADPH-dependent reduction of N-acetyl-5-glutamyl phosphate to yield N-acetyl-L-glutamate 5-semialdehyde. The chain is N-acetyl-gamma-glutamyl-phosphate reductase from Saccharophagus degradans (strain 2-40 / ATCC 43961 / DSM 17024).